Reading from the N-terminus, the 394-residue chain is Elongation factor Tu (394 aa).

Residues 10–204 (KPHVNVGTIG…ALDRYIPTPE (195 aa)) enclose the tr-type G domain. A G1 region spans residues 19 to 26 (GHVDHGKT). 19–26 (GHVDHGKT) provides a ligand contact to GTP. A Mg(2+)-binding site is contributed by Thr-26. Positions 60 to 64 (GITIN) are G2. Positions 81-84 (DCPG) are G3. Residues 81–85 (DCPGH) and 136–139 (NKCD) each bind GTP. Positions 136-139 (NKCD) are G4. The segment at 174 to 176 (SAL) is G5.

It belongs to the TRAFAC class translation factor GTPase superfamily. Classic translation factor GTPase family. EF-Tu/EF-1A subfamily. Monomer.

Its subcellular location is the cytoplasm. It catalyses the reaction GTP + H2O = GDP + phosphate + H(+). In terms of biological role, GTP hydrolase that promotes the GTP-dependent binding of aminoacyl-tRNA to the A-site of ribosomes during protein biosynthesis. This chain is Elongation factor Tu, found in Neisseria gonorrhoeae.